The chain runs to 182 residues: Adenine phosphoribosyltransferase (182 aa).

133 to 137 (ATGGS) provides a ligand contact to AMP.

The protein belongs to the purine/pyrimidine phosphoribosyltransferase family. In terms of assembly, homodimer. Mg(2+) serves as cofactor.

It localises to the cytoplasm. Its subcellular location is the nucleus. The enzyme catalyses AMP + diphosphate = 5-phospho-alpha-D-ribose 1-diphosphate + adenine. The protein operates within purine metabolism; AMP biosynthesis via salvage pathway; AMP from adenine: step 1/1. Catalyzes a salvage reaction resulting in the formation of AMP, that is energically less costly than de novo synthesis. This chain is Adenine phosphoribosyltransferase (APT1), found in Yarrowia lipolytica (strain CLIB 122 / E 150) (Yeast).